The following is a 556-amino-acid chain: Myb/SANT-like DNA-binding domain-containing protein 2 (556 aa).

Composition is skewed to polar residues over residues 1–10 (MAASCGSSQL) and 36–45 (GNPSLSDPST). The interval 1–82 (MAASCGSSQL…GGASPSVSFS (82 aa)) is disordered. The segment covering 56-74 (PAAGGAGLGGGGAAGGRGG) has biased composition (gly residues). The Myb-like domain occupies 99–169 (SWTPAETNAL…QCRERIKTLR (71 aa)). Residues 431-458 (PRSPLAEPRGADPSNETPGELEVPSPQA) are disordered.

This is Myb/SANT-like DNA-binding domain-containing protein 2 (MSANTD2) from Gallus gallus (Chicken).